The primary structure comprises 216 residues: MRIILLGPPGAGKGTQAKLISEKFSIPHISTGDIFRANIKEKTPLGIEAKRYIDNGQLVPDEVTIGIVKDRLTKDDCDNGFLLDGFPRTVAQAEALDEFLKGINKELDVALLIKVPEEFILERMTGRRVCTSCGASYHIRFNPPKIEGKCDICDNELIQRKDDTEATVKERLEVYSKQTYPLINYYKDNGIISEVNGTESINEVFGNISNILGRDK.

Residue 10–15 coordinates ATP; it reads GAGKGT. An NMP region spans residues 30–59; the sequence is STGDIFRANIKEKTPLGIEAKRYIDNGQLV. Residues threonine 31, arginine 36, 57 to 59, 85 to 88, and glutamine 92 each bind AMP; these read QLV and GFPR. Residues 126-163 are LID; the sequence is GRRVCTSCGASYHIRFNPPKIEGKCDICDNELIQRKDD. Arginine 127 is an ATP binding site. Positions 130 and 133 each coordinate Zn(2+). 136–137 contacts ATP; that stretch reads SY. Zn(2+) contacts are provided by cysteine 150 and cysteine 153. AMP contacts are provided by arginine 160 and arginine 171. Glutamate 199 contacts ATP.

It belongs to the adenylate kinase family. In terms of assembly, monomer.

The protein resides in the cytoplasm. The catalysed reaction is AMP + ATP = 2 ADP. Its pathway is purine metabolism; AMP biosynthesis via salvage pathway; AMP from ADP: step 1/1. In terms of biological role, catalyzes the reversible transfer of the terminal phosphate group between ATP and AMP. Plays an important role in cellular energy homeostasis and in adenine nucleotide metabolism. In Clostridium botulinum (strain Langeland / NCTC 10281 / Type F), this protein is Adenylate kinase.